The following is a 305-amino-acid chain: MSSNDSNDTDKQHTRLDPTGVDDAYIPPEQPETKHHRFKISKDTLRNHFIAAAGEFCGTFMFLWCAYVICNVANHDVALVAAPDGSHPGQLIMIAIGFGFSVMFSIWCFAGVSGGALNPAMSLSLCLARAVSPTRCVVMWVSQIVAGMAAGGAASAMTPGEVLFANSLGLGCSRTRGLFLEMFGTAILCLTVLMTAVEKRETNFMAALPIGISLFIAHVALTAYTGTGVNPARSLGAAVAARYFPHYHWIYWIGTLLGSILAWSVWQLLQILDYTTYVTAEKAASTKEKAQKKGETSSSSAVAEV.

The segment at 1–34 is disordered; that stretch reads MSSNDSNDTDKQHTRLDPTGVDDAYIPPEQPETK. Topologically, residues 1 to 48 are cytoplasmic; it reads MSSNDSNDTDKQHTRLDPTGVDDAYIPPEQPETKHHRFKISKDTLRNH. The helical transmembrane segment at 49-69 threads the bilayer; sequence FIAAAGEFCGTFMFLWCAYVI. The Extracellular segment spans residues 70 to 91; that stretch reads CNVANHDVALVAAPDGSHPGQL. A helical membrane pass occupies residues 92–112; sequence IMIAIGFGFSVMFSIWCFAGV. Residues 113–136 are Cytoplasmic-facing; sequence SGGALNPAMSLSLCLARAVSPTRC. The NPA 1 motif lies at 118–120; sequence NPA. The helical transmembrane segment at 137-157 threads the bilayer; it reads VVMWVSQIVAGMAAGGAASAM. Residues 158–176 lie on the Extracellular side of the membrane; that stretch reads TPGEVLFANSLGLGCSRTR. A helical membrane pass occupies residues 177–197; the sequence is GLFLEMFGTAILCLTVLMTAV. The Cytoplasmic portion of the chain corresponds to 198–203; it reads EKRETN. Residues 204 to 224 form a helical membrane-spanning segment; it reads FMAALPIGISLFIAHVALTAY. Topologically, residues 225-248 are extracellular; sequence TGTGVNPARSLGAAVAARYFPHYH. Positions 230 to 232 match the NPA 2 motif; sequence NPA. Residues 249 to 269 form a helical membrane-spanning segment; it reads WIYWIGTLLGSILAWSVWQLL. The Cytoplasmic portion of the chain corresponds to 270–305; sequence QILDYTTYVTAEKAASTKEKAQKKGETSSSSAVAEV. The span at 286–295 shows a compositional bias: basic and acidic residues; sequence TKEKAQKKGE. The interval 286-305 is disordered; the sequence is TKEKAQKKGETSSSSAVAEV. A compositionally biased stretch (polar residues) spans 296–305; it reads TSSSSAVAEV.

It belongs to the MIP/aquaporin (TC 1.A.8) family.

The protein resides in the endoplasmic reticulum membrane. The protein localises to the cell membrane. Water channel required to facilitate the transport of water across membranes. Involved in sporulation, freeze tolerance and osmotolerance. Is non-functional in most laboratory strains. The polypeptide is Aquaporin-1 (AQY1) (Saccharomyces cerevisiae (strain YJM789) (Baker's yeast)).